Reading from the N-terminus, the 508-residue chain is Chromosomal replication initiator protein DnaA (508 aa).

The interval 1 to 90 is domain I, interacts with DnaA modulators; sequence MSVELWQQCV…RRSSAPRAAP (90 aa). A domain II region spans residues 91–171; sequence NAPVSAAVAA…QVEGALKHTS (81 aa). A disordered region spans residues 130–160; that stretch reads EVEEPSSRDSFDSMSDSGSVPAASGRTEQRT. The segment at 172-388 is domain III, AAA+ region; that stretch reads YLNRTFTFET…GALKRVIAHS (217 aa). ATP is bound by residues Gly216, Gly218, Lys219, and Thr220. The domain IV, binds dsDNA stretch occupies residues 389-508; it reads HFMGRDITIE…YKNLLRTLTT (120 aa).

Belongs to the DnaA family. As to quaternary structure, oligomerizes as a right-handed, spiral filament on DNA at oriC.

It is found in the cytoplasm. In terms of biological role, plays an essential role in the initiation and regulation of chromosomal replication. ATP-DnaA binds to the origin of replication (oriC) to initiate formation of the DNA replication initiation complex once per cell cycle. Binds the DnaA box (a 9 base pair repeat at the origin) and separates the double-stranded (ds)DNA. Forms a right-handed helical filament on oriC DNA; dsDNA binds to the exterior of the filament while single-stranded (ss)DNA is stabiized in the filament's interior. The ATP-DnaA-oriC complex binds and stabilizes one strand of the AT-rich DNA unwinding element (DUE), permitting loading of DNA polymerase. After initiation quickly degrades to an ADP-DnaA complex that is not apt for DNA replication. Binds acidic phospholipids. This Pseudomonas entomophila (strain L48) protein is Chromosomal replication initiator protein DnaA.